The following is a 380-amino-acid chain: Crotonobetainyl-CoA reductase (380 aa).

This sequence belongs to the acyl-CoA dehydrogenase family. In terms of assembly, homotetramer. FAD is required as a cofactor.

It is found in the cytoplasm. The catalysed reaction is 4-(trimethylamino)butanoyl-CoA + oxidized [electron-transfer flavoprotein] + H(+) = crotonobetainyl-CoA + reduced [electron-transfer flavoprotein]. Its pathway is amine and polyamine metabolism; carnitine metabolism. Functionally, catalyzes the reduction of crotonobetainyl-CoA to gamma-butyrobetainyl-CoA. This chain is Crotonobetainyl-CoA reductase, found in Salmonella agona (strain SL483).